Here is a 264-residue protein sequence, read N- to C-terminus: NADH dehydrogenase [ubiquinone] iron-sulfur protein 3, mitochondrial (264 aa).

A mitochondrion-targeting transit peptide spans 1–36 (MAAAAVARLWWRGILGASALTRGTGRPSVLLLPVRR).

Belongs to the complex I 30 kDa subunit family. As to quaternary structure, core subunit of respiratory chain NADH dehydrogenase (Complex I) which is composed of 45 different subunits. Interacts with NDUFAF3. Interacts with RAB5IF. Found in subcomplexes containing subunits NDUFS2, MT-ND1 and NDUFA13.

The protein localises to the mitochondrion inner membrane. The catalysed reaction is a ubiquinone + NADH + 5 H(+)(in) = a ubiquinol + NAD(+) + 4 H(+)(out). Its function is as follows. Core subunit of the mitochondrial membrane respiratory chain NADH dehydrogenase (Complex I) which catalyzes electron transfer from NADH through the respiratory chain, using ubiquinone as an electron acceptor. Essential for the catalytic activity and assembly of complex I. In Pan troglodytes (Chimpanzee), this protein is NADH dehydrogenase [ubiquinone] iron-sulfur protein 3, mitochondrial (NDUFS3).